The following is a 261-amino-acid chain: Leucine-rich repeat-containing protein 18 (261 aa).

LRR repeat units follow at residues 28–49, 51–72, 74–95, 97–118, 122–144, 145–167, and 168–189; these read GKKR…ILRL, DMDE…ISKF, NLRW…IGQM, SLLY…VELK, NIRA…GALK, ELHE…SKLP, and KLKK…EIFI.

It localises to the cytoplasm. Its function is as follows. May be involved in the regulation of spermatogenesis and sperm maturation. The polypeptide is Leucine-rich repeat-containing protein 18 (LRRC18) (Homo sapiens (Human)).